The primary structure comprises 375 residues: Chaperone protein DnaJ (375 aa).

In terms of domain architecture, J spans 5 to 70; that stretch reads DYYEVLGVAR…NKRRAYDAHG (66 aa). The CR-type zinc finger occupies 131–208; it reads GIERRIEIPT…CHGAGRVEED (78 aa). Residues C144, C147, C160, C163, C182, C185, C196, and C199 each contribute to the Zn(2+) site. CXXCXGXG motif repeat units follow at residues 144-151, 160-167, 182-189, and 196-203; these read CAPCHGSG, CGTCHGRG, CPHCDGRG, and CKTCHGAG.

It belongs to the DnaJ family. Homodimer. Zn(2+) is required as a cofactor.

The protein localises to the cytoplasm. Functionally, participates actively in the response to hyperosmotic and heat shock by preventing the aggregation of stress-denatured proteins and by disaggregating proteins, also in an autonomous, DnaK-independent fashion. Unfolded proteins bind initially to DnaJ; upon interaction with the DnaJ-bound protein, DnaK hydrolyzes its bound ATP, resulting in the formation of a stable complex. GrpE releases ADP from DnaK; ATP binding to DnaK triggers the release of the substrate protein, thus completing the reaction cycle. Several rounds of ATP-dependent interactions between DnaJ, DnaK and GrpE are required for fully efficient folding. Also involved, together with DnaK and GrpE, in the DNA replication of plasmids through activation of initiation proteins. The protein is Chaperone protein DnaJ of Xanthomonas axonopodis pv. citri (strain 306).